The primary structure comprises 573 residues: Urease subunit alpha 1 (573 aa).

The Urease domain maps to 136–573; that stretch reads GGIDTHVHFI…LPLAQRYFLF (438 aa). Ni(2+) is bound by residues His-141, His-143, and Lys-224. Lys-224 carries the post-translational modification N6-carboxylysine. Residue His-226 participates in substrate binding. Ni(2+) contacts are provided by His-253 and His-279. His-327 functions as the Proton donor in the catalytic mechanism. Position 367 (Asp-367) interacts with Ni(2+).

It belongs to the metallo-dependent hydrolases superfamily. Urease alpha subunit family. As to quaternary structure, may form a heterohexamer of 3 UreC (alpha) and 3 UreAB (gamma/beta) subunits. May also form a heterotrimer of UreA (gamma), UreB (beta) and UreC (alpha) subunits. Three heterotrimers associate to form the active enzyme. It depends on Ni cation as a cofactor. Carboxylation allows a single lysine to coordinate two nickel ions.

The protein resides in the cytoplasm. The catalysed reaction is urea + 2 H2O + H(+) = hydrogencarbonate + 2 NH4(+). It participates in nitrogen metabolism; urea degradation; CO(2) and NH(3) from urea (urease route): step 1/1. The sequence is that of Urease subunit alpha 1 from Streptomyces coelicolor (strain ATCC BAA-471 / A3(2) / M145).